The sequence spans 401 residues: Proline-rich protein 30 (401 aa).

Over residues 69 to 80 (PGPHFSSDSNSD) the composition is skewed to polar residues. 3 disordered regions span residues 69–93 (PGPHFSSDSNSDFVPPHSSSHPRSS), 129–191 (SSSL…RGAG), and 357–401 (QSPK…KSPS). Low complexity-rich tracts occupy residues 83–93 (PPHSSSHPRSS) and 129–147 (SSSLSQLQHSSPHSCQSPS). Composition is skewed to polar residues over residues 148 to 186 (RLQDLQSPKITSPVPSSPSPRIQNNKQTWQWPQSGSIKS) and 357 to 368 (QSPKPSQCSRSL).

The polypeptide is Proline-rich protein 30 (Prr30) (Mus musculus (Mouse)).